The following is a 482-amino-acid chain: Glutamyl-tRNA(Gln) amidotransferase subunit A (482 aa).

Catalysis depends on charge relay system residues Lys74 and Ser149. Ser173 serves as the catalytic Acyl-ester intermediate.

This sequence belongs to the amidase family. GatA subfamily. Heterotrimer of A, B and C subunits.

It catalyses the reaction L-glutamyl-tRNA(Gln) + L-glutamine + ATP + H2O = L-glutaminyl-tRNA(Gln) + L-glutamate + ADP + phosphate + H(+). Its function is as follows. Allows the formation of correctly charged Gln-tRNA(Gln) through the transamidation of misacylated Glu-tRNA(Gln) in organisms which lack glutaminyl-tRNA synthetase. The reaction takes place in the presence of glutamine and ATP through an activated gamma-phospho-Glu-tRNA(Gln). This chain is Glutamyl-tRNA(Gln) amidotransferase subunit A, found in Prochlorococcus marinus (strain AS9601).